We begin with the raw amino-acid sequence, 289 residues long: MFNGSLVALVTPMQENGEIDYSNLKELVEWHLENDTDGLVILGTTGESPTITAEERHKIIRQVVDQVNKKIPIIVGTGANSTVHTIEMTQQAMELGADAALIVTPYYNKPTQEGLFQYFKTIAEAVPIAQILYNVPSRTACDLLPETVIRIAKCSNVVGLKEATGDIQRVKQLKAEDLDLLSGDDKTAMDFMLAGGKGVISVVANVVPKPYHAFCITAVSGNVELAKKENDQLSPLYDSLFVESNPIPVKWALSQMGVIPKGIRLPLTPLSERYHAKVRESLQQVGIKC.

T45 provides a ligand contact to pyruvate. Y133 serves as the catalytic Proton donor/acceptor. Catalysis depends on K161, which acts as the Schiff-base intermediate with substrate. Pyruvate is bound at residue I200.

This sequence belongs to the DapA family. Homotetramer; dimer of dimers.

The protein resides in the cytoplasm. It catalyses the reaction L-aspartate 4-semialdehyde + pyruvate = (2S,4S)-4-hydroxy-2,3,4,5-tetrahydrodipicolinate + H2O + H(+). Its pathway is amino-acid biosynthesis; L-lysine biosynthesis via DAP pathway; (S)-tetrahydrodipicolinate from L-aspartate: step 3/4. Its function is as follows. Catalyzes the condensation of (S)-aspartate-beta-semialdehyde [(S)-ASA] and pyruvate to 4-hydroxy-tetrahydrodipicolinate (HTPA). The chain is 4-hydroxy-tetrahydrodipicolinate synthase from Coxiella burnetii (strain Dugway 5J108-111).